The following is a 61-amino-acid chain: Large ribosomal subunit protein uL30 (61 aa).

This sequence belongs to the universal ribosomal protein uL30 family. In terms of assembly, part of the 50S ribosomal subunit.

The polypeptide is Large ribosomal subunit protein uL30 (Chlorobaculum parvum (strain DSM 263 / NCIMB 8327) (Chlorobium vibrioforme subsp. thiosulfatophilum)).